Here is a 192-residue protein sequence, read N- to C-terminus: UPF0149 protein VIBHAR_03551 (192 aa).

It belongs to the UPF0149 family.

The sequence is that of UPF0149 protein VIBHAR_03551 from Vibrio campbellii (strain ATCC BAA-1116).